A 146-amino-acid chain; its full sequence is MKKIDVTEAIILAKKERNLTWEGIAAELGMGTVWVTSACLGMNSMPEAVAEKLCAYLELPEGAKAALMEYPTKAWDKEVPQDPLIYRLYEVVGVYGDTLKEVIQEKFGDGIMSAIDFTMDVAKEENPKGDRVVLTLNGKFLPYKAW.

Residues arginine 87, glutamate 90, and serine 113 contribute to the active site.

The protein belongs to the cyanase family.

The catalysed reaction is cyanate + hydrogencarbonate + 3 H(+) = NH4(+) + 2 CO2. In terms of biological role, catalyzes the reaction of cyanate with bicarbonate to produce ammonia and carbon dioxide. This chain is Cyanate hydratase, found in Teredinibacter turnerae (strain ATCC 39867 / T7901).